The following is a 229-amino-acid chain: 5'-methylthioadenosine/S-adenosylhomocysteine nucleosidase (229 aa).

The active-site Proton acceptor is glutamate 12. Substrate is bound by residues glycine 78, isoleucine 152, and methionine 173–glutamate 174. Aspartate 197 functions as the Proton donor in the catalytic mechanism.

It belongs to the PNP/UDP phosphorylase family. MtnN subfamily.

It catalyses the reaction S-adenosyl-L-homocysteine + H2O = S-(5-deoxy-D-ribos-5-yl)-L-homocysteine + adenine. It carries out the reaction S-methyl-5'-thioadenosine + H2O = 5-(methylsulfanyl)-D-ribose + adenine. The catalysed reaction is 5'-deoxyadenosine + H2O = 5-deoxy-D-ribose + adenine. The protein operates within amino-acid biosynthesis; L-methionine biosynthesis via salvage pathway; S-methyl-5-thio-alpha-D-ribose 1-phosphate from S-methyl-5'-thioadenosine (hydrolase route): step 1/2. Its function is as follows. Catalyzes the irreversible cleavage of the glycosidic bond in both 5'-methylthioadenosine (MTA) and S-adenosylhomocysteine (SAH/AdoHcy) to adenine and the corresponding thioribose, 5'-methylthioribose and S-ribosylhomocysteine, respectively. Also cleaves 5'-deoxyadenosine, a toxic by-product of radical S-adenosylmethionine (SAM) enzymes, into 5-deoxyribose and adenine. The sequence is that of 5'-methylthioadenosine/S-adenosylhomocysteine nucleosidase from Histophilus somni (strain 129Pt) (Haemophilus somnus).